Reading from the N-terminus, the 422-residue chain is COUP transcription factor 1 (422 aa).

The segment at 1 to 80 (MAMVVSSWRD…QGPPGSGQSQ (80 aa)) is disordered. Positions 39 to 66 (EQQQAGSGAPHTPQTPGQPGAPATPGTQ) are enriched in low complexity. A DNA-binding region (nuclear receptor) is located at residues 82 to 157 (HIECVVCGDK…VGMRREAVQR (76 aa)). 2 NR C4-type zinc fingers span residues 85-105 (CVVCGDKSSGKHYGQFTCEGC) and 121-145 (CRANRNCPIDQHHRNQCQYCRLKKC). The NR LBD domain occupies 183-409 (YLSGYISLLL…TLIRDMLLSG (227 aa)). An important for dimerization region spans residues 343–422 (LQEKSQCALE…NWPYMSIQCS (80 aa)).

This sequence belongs to the nuclear hormone receptor family. NR2 subfamily. As to quaternary structure, binds DNA as dimer; homodimer and probable heterodimer with NR2F6. Interacts with GTF2B; this interaction is direct. Interacts with COPS2.

It localises to the nucleus. Its function is as follows. Coup (chicken ovalbumin upstream promoter) transcription factor binds to the ovalbumin promoter and, in conjunction with another protein (S300-II) stimulates initiation of transcription. Binds to both direct repeats and palindromes of the 5'-AGGTCA-3' motif. Represses transcriptional activity of LHCG. This chain is COUP transcription factor 1 (Nr2f1), found in Mus musculus (Mouse).